The primary structure comprises 169 residues: Benzoate 1,2-dioxygenase subunit beta (169 aa).

Belongs to the bacterial ring-hydroxylating dioxygenase beta subunit family. In terms of assembly, this dioxygenase system consists of three proteins: the two subunits of the hydroxylase (BenA and BenB), and an electron transfer component (BenC).

The catalysed reaction is benzoate + NADH + O2 + H(+) = (1R,6S)-1,6-dihydroxycyclohexa-2,4-diene-1-carboxylate + NAD(+). Its pathway is aromatic compound metabolism; benzoate degradation via hydroxylation; catechol from benzoate: step 1/2. Functionally, degradation of benzoate to 2-hydro-1,2-dihydroxybenzoate (DHB). The beta subunit may be responsible for the substrate specificity of the enzyme. In Acinetobacter baylyi (strain ATCC 33305 / BD413 / ADP1), this protein is Benzoate 1,2-dioxygenase subunit beta (benB).